We begin with the raw amino-acid sequence, 124 residues long: Small ribosomal subunit protein uS12 (124 aa).

Positions 1-23 (MATINQLVRKPRKRPVAKSDVPA) are disordered. Aspartate 89 is subject to 3-methylthioaspartic acid. The disordered stretch occupies residues 101–124 (ALDTSGVQNRRQGRSKYGTKRPKS). The segment covering 111-124 (RQGRSKYGTKRPKS) has biased composition (basic residues).

This sequence belongs to the universal ribosomal protein uS12 family. As to quaternary structure, part of the 30S ribosomal subunit. Contacts proteins S8 and S17. May interact with IF1 in the 30S initiation complex.

In terms of biological role, with S4 and S5 plays an important role in translational accuracy. Its function is as follows. Interacts with and stabilizes bases of the 16S rRNA that are involved in tRNA selection in the A site and with the mRNA backbone. Located at the interface of the 30S and 50S subunits, it traverses the body of the 30S subunit contacting proteins on the other side and probably holding the rRNA structure together. The combined cluster of proteins S8, S12 and S17 appears to hold together the shoulder and platform of the 30S subunit. This chain is Small ribosomal subunit protein uS12, found in Chromohalobacter salexigens (strain ATCC BAA-138 / DSM 3043 / CIP 106854 / NCIMB 13768 / 1H11).